The sequence spans 853 residues: DNA mismatch repair protein MutS (853 aa).

Residue 613–620 participates in ATP binding; it reads GPNMGGKS.

Belongs to the DNA mismatch repair MutS family.

Its function is as follows. This protein is involved in the repair of mismatches in DNA. It is possible that it carries out the mismatch recognition step. This protein has a weak ATPase activity. The chain is DNA mismatch repair protein MutS from Vibrio vulnificus (strain YJ016).